A 548-amino-acid polypeptide reads, in one-letter code: DNA ligase (548 aa).

Residue Glu-196 coordinates ATP. Residue Lys-198 is the N6-AMP-lysine intermediate of the active site. Residues Arg-203, Arg-218, Glu-250, and Phe-284 each coordinate ATP. Glu-250 serves as a coordination point for a divalent metal cation. Glu-345 lines the a divalent metal cation pocket. ATP-binding residues include Arg-361 and Lys-365. The segment at 515 to 548 (EQLIRNSQENTKKTFARLATTYDGPSPNKKLKLN) is disordered.

Belongs to the ATP-dependent DNA ligase family. Requires a divalent metal cation as cofactor.

It catalyses the reaction ATP + (deoxyribonucleotide)n-3'-hydroxyl + 5'-phospho-(deoxyribonucleotide)m = (deoxyribonucleotide)n+m + AMP + diphosphate.. Functionally, able to ligate a double-stranded synthetic DNA substrate containing a single nick and inefficiently ligated a 1 nucleotide gap but did not ligate a 2 nucleotide gap. It is able to ligate short, complementary overhangs but not blunt-ended double-stranded DNA. May be implicated in DNA repair and recombination. The protein is DNA ligase (LIG) of Lepidoptera (butterflies and moths).